We begin with the raw amino-acid sequence, 410 residues long: LL-diaminopimelate aminotransferase (410 aa).

Substrate contacts are provided by Tyr15 and Gly42. Pyridoxal 5'-phosphate is bound by residues Tyr72, 108–109 (SK), Tyr132, Asn187, Tyr218, and 246–248 (SFS). Substrate contacts are provided by Lys109, Tyr132, and Asn187. Residue Lys249 is modified to N6-(pyridoxal phosphate)lysine. Pyridoxal 5'-phosphate-binding residues include Arg257 and Asn292. Substrate contacts are provided by Asn292 and Arg388.

Belongs to the class-I pyridoxal-phosphate-dependent aminotransferase family. LL-diaminopimelate aminotransferase subfamily. Homodimer. Pyridoxal 5'-phosphate serves as cofactor.

It catalyses the reaction (2S,6S)-2,6-diaminopimelate + 2-oxoglutarate = (S)-2,3,4,5-tetrahydrodipicolinate + L-glutamate + H2O + H(+). It functions in the pathway amino-acid biosynthesis; L-lysine biosynthesis via DAP pathway; LL-2,6-diaminopimelate from (S)-tetrahydrodipicolinate (aminotransferase route): step 1/1. In terms of biological role, involved in the synthesis of meso-diaminopimelate (m-DAP or DL-DAP), required for both lysine and peptidoglycan biosynthesis. Catalyzes the direct conversion of tetrahydrodipicolinate to LL-diaminopimelate. The protein is LL-diaminopimelate aminotransferase of Syntrophotalea carbinolica (strain DSM 2380 / NBRC 103641 / GraBd1) (Pelobacter carbinolicus).